We begin with the raw amino-acid sequence, 221 residues long: Large ribosomal subunit protein uL4 (221 aa).

Positions 56–83 (HATKTRGMVSGGGRKPWKQKGTGRARQG) are disordered.

It belongs to the universal ribosomal protein uL4 family. Part of the 50S ribosomal subunit.

Functionally, one of the primary rRNA binding proteins, this protein initially binds near the 5'-end of the 23S rRNA. It is important during the early stages of 50S assembly. It makes multiple contacts with different domains of the 23S rRNA in the assembled 50S subunit and ribosome. In terms of biological role, forms part of the polypeptide exit tunnel. This chain is Large ribosomal subunit protein uL4, found in Bifidobacterium adolescentis (strain ATCC 15703 / DSM 20083 / NCTC 11814 / E194a).